A 328-amino-acid chain; its full sequence is Arabinose 5-phosphate isomerase KdsD (328 aa).

One can recognise an SIS domain in the interval 42 to 184 (CEKMFWCKGK…AVALLKARGF (143 aa)). Substrate contacts are provided by residues 75-76 (GT), His82, His88, 114-123 (ALIPVLKRLH), 148-150 (KVA), Thr222, and Asp275. Zn(2+) is bound at residue His82. Residues 210–268 (MHTGDEIPHVKKTASLRDALLEVTRKNLGMTVICDDNMMIEGIFTDGDLRRVFDMGVDV) form the CBS 1 domain. The 52-residue stretch at 277-328 (MTPGGIRVRPGILAVEALNLMQSRHITSVMVADGDHLLGVLHMHDLLRAGVV) folds into the CBS 2 domain.

Belongs to the SIS family. GutQ/KpsF subfamily. As to quaternary structure, homotetramer.

It catalyses the reaction D-arabinose 5-phosphate = D-ribulose 5-phosphate. Its pathway is carbohydrate biosynthesis; 3-deoxy-D-manno-octulosonate biosynthesis; 3-deoxy-D-manno-octulosonate from D-ribulose 5-phosphate: step 1/3. It functions in the pathway bacterial outer membrane biogenesis; lipopolysaccharide biosynthesis. Completely inhibited by 10 uM of nickel, copper, cadmium and mercury ions. Inhibited by zinc with an IC(50) of 1-3 uM. Metal ion inhibition may be a mechanism to control activity in vivo. Its function is as follows. Involved in the biosynthesis of 3-deoxy-D-manno-octulosonate (KDO), a unique 8-carbon sugar component of lipopolysaccharides (LPSs). KdsD is not essential in the KDO biosynthesis and can be substituted by GutQ. Catalyzes the reversible aldol-ketol isomerization between D-ribulose 5-phosphate (Ru5P) and D-arabinose 5-phosphate (A5P). This is Arabinose 5-phosphate isomerase KdsD (kdsD) from Escherichia coli (strain K12).